The following is a 301-amino-acid chain: Ribosomal RNA small subunit methyltransferase H (301 aa).

Residues 35 to 37 (GGH), Asp-55, Phe-84, Asp-105, and Gln-112 contribute to the S-adenosyl-L-methionine site.

The protein belongs to the methyltransferase superfamily. RsmH family.

Its subcellular location is the cytoplasm. The enzyme catalyses cytidine(1402) in 16S rRNA + S-adenosyl-L-methionine = N(4)-methylcytidine(1402) in 16S rRNA + S-adenosyl-L-homocysteine + H(+). In terms of biological role, specifically methylates the N4 position of cytidine in position 1402 (C1402) of 16S rRNA. The sequence is that of Ribosomal RNA small subunit methyltransferase H from Chloroflexus aurantiacus (strain ATCC 29366 / DSM 635 / J-10-fl).